A 1297-amino-acid chain; its full sequence is Phosphoribosylformylglycinamidine synthase (1297 aa).

The segment at 301–329 (TAISPFPGAATGSGGEIRDEGATGRGAKP) is disordered. 308-319 (GAATGSGGEIRD) provides a ligand contact to ATP. Mg(2+) contacts are provided by Asp-680, Glu-719, Asn-723, and Asp-887. Ser-889 contributes to the ATP binding site. Positions 1045 to 1297 (IAILREQGVN…RLFRNARMVF (253 aa)) constitute a Glutamine amidotransferase type-1 domain. Catalysis depends on Cys-1138, which acts as the Nucleophile. Catalysis depends on residues His-1263 and Glu-1265.

It in the N-terminal section; belongs to the FGAMS family. Monomer.

It is found in the cytoplasm. The enzyme catalyses N(2)-formyl-N(1)-(5-phospho-beta-D-ribosyl)glycinamide + L-glutamine + ATP + H2O = 2-formamido-N(1)-(5-O-phospho-beta-D-ribosyl)acetamidine + L-glutamate + ADP + phosphate + H(+). It functions in the pathway purine metabolism; IMP biosynthesis via de novo pathway; 5-amino-1-(5-phospho-D-ribosyl)imidazole from N(2)-formyl-N(1)-(5-phospho-D-ribosyl)glycinamide: step 1/2. Its function is as follows. Phosphoribosylformylglycinamidine synthase involved in the purines biosynthetic pathway. Catalyzes the ATP-dependent conversion of formylglycinamide ribonucleotide (FGAR) and glutamine to yield formylglycinamidine ribonucleotide (FGAM) and glutamate. The protein is Phosphoribosylformylglycinamidine synthase of Haemophilus influenzae (strain ATCC 51907 / DSM 11121 / KW20 / Rd).